The sequence spans 488 residues: Coagulation factor X (488 aa).

Positions 1-31 are cleaved as a signal peptide; it reads MGRPLHLVLLSASLAGLLLLGESLFIRREQA. A propeptide spanning residues 32–40 is cleaved from the precursor; it reads NNILARVTR. In terms of domain architecture, Gla spans 41–85; that stretch reads ANSFLEEMKKGHLERECMEETCSYEEAREVFEDSDKTNEFWNKYK. 4-carboxyglutamate occurs at positions 46, 47, 54, 56, 59, 60, 65, 66, 69, 72, and 79. An intrachain disulfide couples cysteine 57 to cysteine 62. Residues 86 to 122 form the EGF-like 1; calcium-binding domain; sequence DGDQCETSPCQNQGKCKDGLGEYTCTCLEGFEGKNCE. Disulfide bonds link cysteine 90/cysteine 101, cysteine 95/cysteine 110, cysteine 112/cysteine 121, cysteine 129/cysteine 140, cysteine 136/cysteine 149, cysteine 151/cysteine 164, cysteine 172/cysteine 342, cysteine 241/cysteine 246, cysteine 261/cysteine 277, cysteine 390/cysteine 404, and cysteine 415/cysteine 443. The residue at position 103 (aspartate 103) is a (3R)-3-hydroxyaspartate. The region spanning 125 to 165 is the EGF-like 2 domain; that stretch reads TRKLCSLDNGDCDQFCHEEQNSVVCSCARGYTLADNGKACI. Residues 183–203 form an O-glycosylated at one site region; it reads SVAQATSSSGEAPDSITWKPY. Positions 183-234 are cleaved as a propeptide — activation peptide; the sequence is SVAQATSSSGEAPDSITWKPYDAADLDPTENPFDLLDFNQTQPERGDNNLTR. O-linked (GalNAc...) threonine glycans are attached at residues threonine 199 and threonine 211. Asparagine 221 and asparagine 231 each carry an N-linked (GlcNAc...) asparagine glycan. The Peptidase S1 domain occupies 235–467; that stretch reads IVGGQECKDG…FLKWIDRSMK (233 aa). Active-site charge relay system residues include histidine 276 and aspartate 322. Residue serine 419 is the Charge relay system of the active site. The segment at 476 to 485 is O-glycosylated at one site; it reads SHAPEVITSS.

It belongs to the peptidase S1 family. In terms of assembly, the two chains are formed from a single-chain precursor by the excision of two Arg residues and are held together by 1 or more disulfide bonds. Forms a heterodimer with SERPINA5. Interacts (inactive and activated) with ixolaris, an anticoagulant protein from Ixodes scapularis saliva. Interacts (activated) with iripin-8, a serine protease inhibitor from Ixodes ricinus saliva. Interacts (activated) with FXa-directed anticoagulant from Aedes albopictus saliva. Interacts (activated) with guianensin, an anticoagulant protein from Simulium guianense saliva. Interacts (activated) with simukunin, an anticoagulant protein from Simulium vittatum saliva. In terms of processing, the vitamin K-dependent, enzymatic carboxylation of some glutamate residues allows the modified protein to bind calcium. Post-translationally, N- and O-glycosylated. O-glycosylated with core 1 or possibly core 8 glycans. Proteolytically cleaved and activated by cathepsin CTSG. The activation peptide is cleaved by factor IXa (in the intrinsic pathway), or by factor VIIa (in the extrinsic pathway). In terms of processing, the iron and 2-oxoglutarate dependent 3-hydroxylation of aspartate and asparagine is (R) stereospecific within EGF domains. In terms of tissue distribution, plasma; synthesized in the liver.

Its subcellular location is the secreted. The enzyme catalyses Selective cleavage of Arg-|-Thr and then Arg-|-Ile bonds in prothrombin to form thrombin.. Inhibited by SERPINA5 and SERPINA10. Functionally, factor Xa is a vitamin K-dependent glycoprotein that converts prothrombin to thrombin in the presence of factor Va, calcium and phospholipid during blood clotting. Factor Xa activates pro-inflammatory signaling pathways in a protease-activated receptor (PAR)-dependent manner. Up-regulates expression of protease-activated receptors (PARs) F2R, F2RL1 and F2RL2 in dermal microvascular endothelial cells. Triggers the production of pro-inflammatory cytokines, such as MCP-1/CCL2 and IL6, in cardiac fibroblasts and umbilical vein endothelial cells in PAR-1/F2R-dependent manner. Triggers the production of pro-inflammatory cytokines, such as MCP-1/CCL2, IL6, TNF-alpha/TNF, IL-1beta/IL1B, IL8/CXCL8 and IL18, in endothelial cells and atrial tissues. Induces expression of adhesion molecules, such as ICAM1, VCAM1 and SELE, in endothelial cells and atrial tissues. Increases expression of phosphorylated ERK1/2 in dermal microvascular endothelial cells and atrial tissues. Triggers activation of the transcription factor NF-kappa-B in dermal microvascular endothelial cells and atrial tissues. Activates pro-inflammatory and pro-fibrotic responses in dermal fibroblasts and enhances wound healing probably via PAR-2/F2RL1-dependent mechanism. Activates barrier protective signaling responses in endothelial cells in PAR-2/F2RL1-dependent manner; the activity depends on the cleavage of PAR-2/F2RL1 by factor Xa. Up-regulates expression of plasminogen activator inhibitor 1 (SERPINE1) in atrial tissues. This chain is Coagulation factor X (F10), found in Homo sapiens (Human).